The sequence spans 174 residues: Large ribosomal subunit protein uL10 (174 aa).

Belongs to the universal ribosomal protein uL10 family. Part of the ribosomal stalk of the 50S ribosomal subunit. The N-terminus interacts with L11 and the large rRNA to form the base of the stalk. The C-terminus forms an elongated spine to which L12 dimers bind in a sequential fashion forming a multimeric L10(L12)X complex.

Forms part of the ribosomal stalk, playing a central role in the interaction of the ribosome with GTP-bound translation factors. This chain is Large ribosomal subunit protein uL10, found in Anaeromyxobacter dehalogenans (strain 2CP-1 / ATCC BAA-258).